A 263-amino-acid polypeptide reads, in one-letter code: Palmitoyltransferase ZDHHC22 (263 aa).

At 1–9 (MLALRLLNV) the chain is on the cytoplasmic side. Residues 10–30 (VAPAYFLCISLVTFVLQLFLF) traverse the membrane as a helical segment. Topologically, residues 31–48 (LPSMREDPAAARLFSPAL) are lumenal. The helical transmembrane segment at 49 to 69 (LHGALFLFLSANALGNYVLVI) threads the bilayer. Over 70-125 (QNSPDDLGACQGASARKTPCPSPSTHFCRVCARVTLRHDHHCFFTGNCIGSRNMRN) the chain is Cytoplasmic. A DHHC domain is found at 92–131 (PSTHFCRVCARVTLRHDHHCFFTGNCIGSRNMRNFVLFCL). Cysteine 111 acts as the S-palmitoyl cysteine intermediate in catalysis. Helical transmembrane passes span 126–146 (FVLF…AGVA) and 147–167 (YISA…TLLP). Over 168 to 182 (TSISQFFSGAVLGSE) the chain is Cytoplasmic. Residues 183 to 203 (MFVILMLYLWFAIGLACAGFC) form a helical membrane-spanning segment. Over 204-263 (CHQLLLILRGQTRHQVRKGVAVRARPWRKNLQEVFGKRWLLGLLVPMFNVGSESSKQQDK) the chain is Lumenal.

The protein belongs to the DHHC palmitoyltransferase family. As to quaternary structure, interacts with CNN3. Widely expressed.

The protein resides in the endoplasmic reticulum membrane. It is found in the golgi apparatus membrane. The catalysed reaction is L-cysteinyl-[protein] + hexadecanoyl-CoA = S-hexadecanoyl-L-cysteinyl-[protein] + CoA. In terms of biological role, palmitoyltransferase that could catalyze the addition of palmitate onto various protein substrates and be involved in a variety of cellular processes. Catalyzes the palmitoylation of KCNMA1, regulating localization of KCNMA1 to the plasma membrane. Might also mediate palmitoylation of CNN3. The chain is Palmitoyltransferase ZDHHC22 from Homo sapiens (Human).